The sequence spans 993 residues: Importin subunit beta-5 (993 aa).

In terms of domain architecture, Importin N-terminal spans 24–100 (AELGLRDLEK…RETLLHLLVS (77 aa)).

The protein resides in the nucleus. Its function is as follows. Required for nuclear protein import and mediates docking of import substrate to distinct nucleoporins. Serves a receptor for nuclear localization signals. Mediates the nuclear import of TATA-binding protein (TBP) and of histones H2A and H2B. The polypeptide is Importin subunit beta-5 (kap114) (Schizosaccharomyces pombe (strain 972 / ATCC 24843) (Fission yeast)).